Consider the following 446-residue polypeptide: 3-phosphoshikimate 1-carboxyvinyltransferase (446 aa).

3-phosphoshikimate-binding residues include Lys26, Ser27, and Arg31. Residue Lys26 coordinates phosphoenolpyruvate. Residues Gly100 and Arg128 each contribute to the phosphoenolpyruvate site. 3-phosphoshikimate is bound by residues Ser171, Ser172, Gln173, Ser200, Glu315, and His344. Gln173 provides a ligand contact to phosphoenolpyruvate. Catalysis depends on Glu315, which acts as the Proton acceptor. 3 residues coordinate phosphoenolpyruvate: Arg348, Arg389, and Lys414.

This sequence belongs to the EPSP synthase family. In terms of assembly, monomer.

The protein localises to the cytoplasm. The enzyme catalyses 3-phosphoshikimate + phosphoenolpyruvate = 5-O-(1-carboxyvinyl)-3-phosphoshikimate + phosphate. Its pathway is metabolic intermediate biosynthesis; chorismate biosynthesis; chorismate from D-erythrose 4-phosphate and phosphoenolpyruvate: step 6/7. Functionally, catalyzes the transfer of the enolpyruvyl moiety of phosphoenolpyruvate (PEP) to the 5-hydroxyl of shikimate-3-phosphate (S3P) to produce enolpyruvyl shikimate-3-phosphate and inorganic phosphate. This is 3-phosphoshikimate 1-carboxyvinyltransferase from Mycolicibacterium gilvum (strain PYR-GCK) (Mycobacterium gilvum (strain PYR-GCK)).